The following is a 206-amino-acid chain: 2-phospho-L-lactate guanylyltransferase (206 aa).

This sequence belongs to the CofC family. As to quaternary structure, homodimer.

The catalysed reaction is (2S)-2-phospholactate + GTP + H(+) = (2S)-lactyl-2-diphospho-5'-guanosine + diphosphate. It participates in cofactor biosynthesis; coenzyme F420 biosynthesis. Functionally, guanylyltransferase that catalyzes the activation of (2S)-2-phospholactate (2-PL) as (2S)-lactyl-2-diphospho-5'-guanosine, via the condensation of 2-PL with GTP. It is involved in the biosynthesis of coenzyme F420, a hydride carrier cofactor. This is 2-phospho-L-lactate guanylyltransferase from Archaeoglobus profundus (strain DSM 5631 / JCM 9629 / NBRC 100127 / Av18).